Here is a 189-residue protein sequence, read N- to C-terminus: Low affinity inorganic phosphate transporter 2 (189 aa).

At 1–55 the chain is on the cytoplasmic side; that stretch reads TARYTALVAKDAKRAAADMGKVLHVEIDPEDAKVERMAKDESNQFGLFSWEFVRR. A helical transmembrane segment spans residues 56-76; the sequence is HGLHLFGTCSTWFLLDIAFYS. Residues 77 to 111 lie on the Extracellular side of the membrane; that stretch reads QNLFQKDVFTAIGWIPPAKTMNAVQEVYKIARAQT. Residues 112–132 traverse the membrane as a helical segment; sequence LIALCSTVPGYWFTVAFIDII. Residues 133–134 lie on the Cytoplasmic side of the membrane; it reads GR. The chain crosses the membrane as a helical span at residues 135–155; that stretch reads FAIQLMGFFFMTVFMFAIAIP. Residues 156–165 lie on the Extracellular side of the membrane; it reads YHHWTLQENR. Residues 166–186 traverse the membrane as a helical segment; it reads IGFVIMYSLTFFFANFGPNAT. The Cytoplasmic portion of the chain corresponds to 187 to 189; it reads TFV.

It belongs to the major facilitator superfamily. Phosphate:H(+) symporter (TC 2.A.1.9) family.

It is found in the cell membrane. The catalysed reaction is phosphate(in) + H(+)(in) = phosphate(out) + H(+)(out). Low-affinity transporter for external inorganic phosphate (Pi). This Petunia hybrida (Petunia) protein is Low affinity inorganic phosphate transporter 2.